The primary structure comprises 51 residues: MSHNMKGQKKRLAKAHKQNSRVPVWAIVKTNRKVVSHPRRRHWRRGSLDVK.

The span at 1 to 19 shows a compositional bias: basic residues; the sequence is MSHNMKGQKKRLAKAHKQN. Residues 1-23 are disordered; sequence MSHNMKGQKKRLAKAHKQNSRVP.

Belongs to the eukaryotic ribosomal protein eL39 family.

The protein is Large ribosomal subunit protein eL39 of Methanosarcina mazei (strain ATCC BAA-159 / DSM 3647 / Goe1 / Go1 / JCM 11833 / OCM 88) (Methanosarcina frisia).